The following is a 413-amino-acid chain: Palmitoyltransferase ZDHHC6 (413 aa).

Topologically, residues 1-24 (MGIFCSVIKFENLQDLRRLCHWGP) are cytoplasmic. Residues 25 to 45 (IIALGVIAICSTMAMIDSVLW) traverse the membrane as a helical segment. The Lumenal portion of the chain corresponds to 46–57 (YWPLHTTGGSVN). A helical membrane pass occupies residues 58 to 78 (FIMLINWTVMILYNYFNAMFA). Over 79–143 (GPGFVPRGWK…NCCGHQNHAS (65 aa)) the chain is Cytoplasmic. Residues 99 to 149 (QYCKVCQAYKAPRSHHCRKCNRCVMKMDHHCPWINNCCGHQNHASFTLFLL) enclose the DHHC domain. Catalysis depends on Cys129, which acts as the S-palmitoyl cysteine intermediate. Residues 144–164 (FTLFLLLAPLGCTHAAFIFVM) form a helical membrane-spanning segment. Residues 165-194 (TMYTQLYNRLSFGWNTVKIDMSAARRDPPP) lie on the Lumenal side of the membrane. Residues 195–215 (IVPFGLAAFAATLFALGLALG) form a helical membrane-spanning segment. The Cytoplasmic portion of the chain corresponds to 216–413 (TTIAVGMLFF…PAPEGEKKNR (198 aa)). The region spanning 313–398 (VRSVRYKVIE…PRNCVEKCPC (86 aa)) is the SH3 domain. Residues Cys328, Cys329, and Cys343 are each lipidated (S-palmitoyl cysteine). Positions 410–413 (KKNR) match the Di-lysine motif motif.

This sequence belongs to the DHHC palmitoyltransferase family. As to quaternary structure, homooligomerizes. Interacts with SELENOK. Palmitoylated at 3 different sites by ZDHHC16. The combination of the different palmitoylation events strongly affects the quaternary assembly of ZDHHC6, its localization, stability and function. Palmitoylation at Cys-328 accelerates the turnover of ZDHHC6. Depalmitoylated by LYPLA2.

The protein localises to the endoplasmic reticulum membrane. The enzyme catalyses L-cysteinyl-[protein] + hexadecanoyl-CoA = S-hexadecanoyl-L-cysteinyl-[protein] + CoA. The catalysed reaction is L-cysteinyl-[protein] + octadecanoyl-CoA = S-octadecanoyl-L-cysteinyl-[protein] + CoA. In terms of biological role, endoplasmic reticulum palmitoyl acyltransferase that mediates palmitoylation of proteins such as AMFR, CALX, ITPR1 and TFRC. Palmitoylates calnexin (CALX), which is required for its association with the ribosome-translocon complex and efficient folding of glycosylated proteins. Mediates palmitoylation of AMFR, promoting AMFR distribution to the peripheral endoplasmic reticulum. Together with SELENOK, palmitoylates ITPR1 in immune cells, leading to regulate ITPR1 stability and function. Stearoyltransferase that mediates stearoylation of TFRC to inhibit TFRC-mediated activation of the JNK pathway and mitochondrial fragmentation. This is Palmitoyltransferase ZDHHC6 from Mus musculus (Mouse).